The sequence spans 292 residues: MGDYIVRMTAAQGTVRAFGAMTTEMVGQAAEIHGLSPIATAALGRTMTAAGMMSKMLKGENDKLTIQLKGDGPLGGIVVVSDSKANVRGYVHNPNVYLPLNERGKLDIRTAMGYGYINVIRDMGLKEPYIGLSQLVSGEIADDLTYYFATSEQVPSTVALGVLIDATGVIGAGGFIVQMMPGAEEETVATLEKRLIGFPSVSKLISEGTTPEQILNMLLEGMEPKIVETVPCSFKCNCTRERMERNLISIGKKDLLEIFEDGKGAELQCHFCNTKYNFSHQDIENIVKENVK.

2 cysteine pairs are disulfide-bonded: Cys-236-Cys-238 and Cys-269-Cys-272.

This sequence belongs to the HSP33 family. In terms of processing, under oxidizing conditions two disulfide bonds are formed involving the reactive cysteines. Under reducing conditions zinc is bound to the reactive cysteines and the protein is inactive.

The protein localises to the cytoplasm. In terms of biological role, redox regulated molecular chaperone. Protects both thermally unfolding and oxidatively damaged proteins from irreversible aggregation. Plays an important role in the bacterial defense system toward oxidative stress. The chain is 33 kDa chaperonin from Ruminiclostridium cellulolyticum (strain ATCC 35319 / DSM 5812 / JCM 6584 / H10) (Clostridium cellulolyticum).